The following is a 226-amino-acid chain: Putative mitochondrial outer membrane protein porin 5 (226 aa).

This sequence belongs to the eukaryotic mitochondrial porin (TC 1.B.8.1) family.

It localises to the mitochondrion outer membrane. Its function is as follows. Putative channel that allows diffusion of small hydrophilic molecules through membranes. In Arabidopsis thaliana (Mouse-ear cress), this protein is Putative mitochondrial outer membrane protein porin 5 (VDAC5).